The chain runs to 426 residues: MESLTLQPISKIDGQINLPGSKSVSNRALLLAALASGTTKLTNLLDSDDIRHMLNALKALGVEYKLSADKTECEVTGLGRAFEPNEALELFLGNAGTAMRPLAAALCLGQGEFVLTGEPRMKERPIGHLVTALKAAGADVEYLENENYPPLKIKGTGLHGGTVEIDGSISSQFLTAFLMAAPLSTQETTIKIVGDLVSKPYIDITLDIMATFGVKIENQNYQTFVVPANQTYVAPGDFLVEGDASSASYFLAAAAIKGGEVKVTGIGKKSIQGDVQFADALAAMGTEIEWGDDYVIARKGELNAIDMDFNHIPDAAMTIATAALFAKGTTSIRNVYNWRVKETDRLAAMATELRKVGAVVEEGEDYITITPPASLQHASIDTYDDHRMAMCFSLVALSDTPVTINDPGCTSKTFPDYFDKLKELSC.

3-phosphoshikimate is bound by residues Lys22, Ser23, and Arg27. Residue Lys22 participates in phosphoenolpyruvate binding. 2 residues coordinate phosphoenolpyruvate: Gly96 and Arg124. 3-phosphoshikimate contacts are provided by Ser170, Ser171, Gln172, Ser198, Asp314, Asn337, and Lys341. Gln172 contacts phosphoenolpyruvate. The active-site Proton acceptor is the Asp314. Residues Arg345, Arg387, and Lys412 each coordinate phosphoenolpyruvate.

Belongs to the EPSP synthase family. Monomer.

It localises to the cytoplasm. The catalysed reaction is 3-phosphoshikimate + phosphoenolpyruvate = 5-O-(1-carboxyvinyl)-3-phosphoshikimate + phosphate. It functions in the pathway metabolic intermediate biosynthesis; chorismate biosynthesis; chorismate from D-erythrose 4-phosphate and phosphoenolpyruvate: step 6/7. Its function is as follows. Catalyzes the transfer of the enolpyruvyl moiety of phosphoenolpyruvate (PEP) to the 5-hydroxyl of shikimate-3-phosphate (S3P) to produce enolpyruvyl shikimate-3-phosphate and inorganic phosphate. The sequence is that of 3-phosphoshikimate 1-carboxyvinyltransferase from Aliivibrio fischeri (strain MJ11) (Vibrio fischeri).